The chain runs to 94 residues: uncharacterized protein (94 aa).

2 helical membrane passes run 9-29 (TLAK…FFST) and 34-54 (LIEL…VFIV).

The protein resides in the cell membrane. This is an uncharacterized protein from Bacillus subtilis (strain 168).